The sequence spans 699 residues: Ciliated left-right organizer metallopeptidase (699 aa).

An N-terminal signal peptide occupies residues 1-18 (MKMWRLLLLGVATGRCLH). Residues 19–663 (EETQKSVRLL…SLDHNPSMTE (645 aa)) are Extracellular-facing. His238 contributes to the Zn(2+) binding site. The active site involves Glu239. 2 residues coordinate Zn(2+): His242 and His318. A helical transmembrane segment spans residues 664–684 (LLLSTGFCLLVLILVGALGTL). The Cytoplasmic portion of the chain corresponds to 685-699 (AYQKRAMLQVAPSTT).

It belongs to the peptidase M8 family. Requires Zn(2+) as cofactor. As to expression, specifically expressed in ciliated left-right organizer.

The protein resides in the membrane. Its function is as follows. Putative metalloproteinase that plays a role in left-right patterning process. The polypeptide is Ciliated left-right organizer metallopeptidase (Mus musculus (Mouse)).